We begin with the raw amino-acid sequence, 158 residues long: SsrA-binding protein (158 aa).

The protein belongs to the SmpB family.

It localises to the cytoplasm. In terms of biological role, required for rescue of stalled ribosomes mediated by trans-translation. Binds to transfer-messenger RNA (tmRNA), required for stable association of tmRNA with ribosomes. tmRNA and SmpB together mimic tRNA shape, replacing the anticodon stem-loop with SmpB. tmRNA is encoded by the ssrA gene; the 2 termini fold to resemble tRNA(Ala) and it encodes a 'tag peptide', a short internal open reading frame. During trans-translation Ala-aminoacylated tmRNA acts like a tRNA, entering the A-site of stalled ribosomes, displacing the stalled mRNA. The ribosome then switches to translate the ORF on the tmRNA; the nascent peptide is terminated with the 'tag peptide' encoded by the tmRNA and targeted for degradation. The ribosome is freed to recommence translation, which seems to be the essential function of trans-translation. The protein is SsrA-binding protein of Psychrobacter sp. (strain PRwf-1).